Consider the following 201-residue polypeptide: Small ribosomal subunit protein uS4 (201 aa).

In terms of domain architecture, S4 RNA-binding spans 91–157 (SRLDNVVYRA…VPFQIARETA (67 aa)).

The protein belongs to the universal ribosomal protein uS4 family. As to quaternary structure, part of the 30S ribosomal subunit. Contacts protein S5. The interaction surface between S4 and S5 is involved in control of translational fidelity.

In terms of biological role, one of the primary rRNA binding proteins, it binds directly to 16S rRNA where it nucleates assembly of the body of the 30S subunit. Functionally, with S5 and S12 plays an important role in translational accuracy. This Mycolicibacterium paratuberculosis (strain ATCC BAA-968 / K-10) (Mycobacterium paratuberculosis) protein is Small ribosomal subunit protein uS4.